Here is a 199-residue protein sequence, read N- to C-terminus: Thymidine kinase (199 aa).

Residues 15-22 and 88-91 each bind ATP; these read GSMFSGKS and DEVQ. Glu-89 serves as the catalytic Proton acceptor. The Zn(2+) site is built by Cys-145, Cys-148, Cys-183, and His-186.

Belongs to the thymidine kinase family. As to quaternary structure, homotetramer.

The protein localises to the cytoplasm. It carries out the reaction thymidine + ATP = dTMP + ADP + H(+). This Staphylococcus aureus (strain USA300) protein is Thymidine kinase.